A 335-amino-acid chain; its full sequence is Methionine import ATP-binding protein MetN (335 aa).

An ABC transporter domain is found at 2 to 241 (IQFQRLHKSY…PKHATTRRFV (240 aa)). Residue 38–45 (GHSGAGKS) participates in ATP binding.

This sequence belongs to the ABC transporter superfamily. Methionine importer (TC 3.A.1.24) family. The complex is composed of two ATP-binding proteins (MetN), two transmembrane proteins (MetI) and a solute-binding protein (MetQ).

It localises to the cell inner membrane. It catalyses the reaction L-methionine(out) + ATP + H2O = L-methionine(in) + ADP + phosphate + H(+). The catalysed reaction is D-methionine(out) + ATP + H2O = D-methionine(in) + ADP + phosphate + H(+). Part of the ABC transporter complex MetNIQ involved in methionine import. Responsible for energy coupling to the transport system. The chain is Methionine import ATP-binding protein MetN from Xanthomonas euvesicatoria pv. vesicatoria (strain 85-10) (Xanthomonas campestris pv. vesicatoria).